We begin with the raw amino-acid sequence, 180 residues long: NADH-quinone oxidoreductase subunit I (180 aa).

4Fe-4S ferredoxin-type domains follow at residues 50-80 and 90-119; these read LTRD…LQKT and EFFR…LTPD. Cys-60, Cys-63, Cys-66, Cys-70, Cys-99, Cys-102, Cys-105, and Cys-109 together coordinate [4Fe-4S] cluster.

The protein belongs to the complex I 23 kDa subunit family. NDH-1 is composed of 13 different subunits. Subunits NuoA, H, J, K, L, M, N constitute the membrane sector of the complex. It depends on [4Fe-4S] cluster as a cofactor.

Its subcellular location is the cell inner membrane. It carries out the reaction a quinone + NADH + 5 H(+)(in) = a quinol + NAD(+) + 4 H(+)(out). Functionally, NDH-1 shuttles electrons from NADH, via FMN and iron-sulfur (Fe-S) centers, to quinones in the respiratory chain. The immediate electron acceptor for the enzyme in this species is believed to be ubiquinone. Couples the redox reaction to proton translocation (for every two electrons transferred, four hydrogen ions are translocated across the cytoplasmic membrane), and thus conserves the redox energy in a proton gradient. This chain is NADH-quinone oxidoreductase subunit I, found in Shigella dysenteriae serotype 1 (strain Sd197).